Consider the following 44-residue polypeptide: Thymosin beta-4, Y-chromosomal (44 aa).

The disordered stretch occupies residues 1–44 (MSDKPGMAEIEKFDKSKLKKTETQEKNPLSSKETIEQERQAGES). 2 stretches are compositionally biased toward basic and acidic residues: residues 9–25 (EIEK…ETQE) and 33–44 (ETIEQERQAGES).

It belongs to the thymosin beta family. In terms of tissue distribution, ubiquitous.

The protein resides in the cytoplasm. The protein localises to the cytoskeleton. In terms of biological role, plays an important role in the organization of the cytoskeleton. Binds to and sequesters actin monomers (G actin) and therefore inhibits actin polymerization. The protein is Thymosin beta-4, Y-chromosomal (TMSB4Y) of Homo sapiens (Human).